The following is a 352-amino-acid chain: 26S proteasome regulatory subunit rpn-8 (352 aa).

The 137-residue stretch at 16–152 (VSVAPLVLLS…TDAYFAVDEI (137 aa)) folds into the MPN domain. Residues 303-352 (NRQQQEENDAKKKEGENGEKKEGADKKEGSPAAANGESKEKENSPKEKKK) are disordered. Basic and acidic residues-rich tracts occupy residues 306–331 (QQEE…KKEG) and 339–352 (ESKE…EKKK).

This sequence belongs to the peptidase M67A family.

In terms of biological role, acts as a regulatory subunit of the 26S proteasome which is involved in the ATP-dependent degradation of ubiquitinated proteins. The polypeptide is 26S proteasome regulatory subunit rpn-8 (rpn-8) (Neurospora crassa (strain ATCC 24698 / 74-OR23-1A / CBS 708.71 / DSM 1257 / FGSC 987)).